Here is a 143-residue protein sequence, read N- to C-terminus: Nucleoside diphosphate kinase (143 aa).

Lysine 11, phenylalanine 59, arginine 87, threonine 93, arginine 104, and asparagine 114 together coordinate ATP. Catalysis depends on histidine 117, which acts as the Pros-phosphohistidine intermediate.

Belongs to the NDK family. As to quaternary structure, homotetramer. It depends on Mg(2+) as a cofactor.

It is found in the cytoplasm. The catalysed reaction is a 2'-deoxyribonucleoside 5'-diphosphate + ATP = a 2'-deoxyribonucleoside 5'-triphosphate + ADP. It catalyses the reaction a ribonucleoside 5'-diphosphate + ATP = a ribonucleoside 5'-triphosphate + ADP. Its function is as follows. Major role in the synthesis of nucleoside triphosphates other than ATP. The ATP gamma phosphate is transferred to the NDP beta phosphate via a ping-pong mechanism, using a phosphorylated active-site intermediate. In Clostridium perfringens (strain ATCC 13124 / DSM 756 / JCM 1290 / NCIMB 6125 / NCTC 8237 / Type A), this protein is Nucleoside diphosphate kinase.